The following is a 520-amino-acid chain: Bile acid--coenzyme A ligase (520 aa).

It belongs to the ATP-dependent AMP-binding enzyme family. Homodimer. It depends on Mg(2+) as a cofactor.

The catalysed reaction is cholate + ATP + CoA = choloyl-CoA + AMP + diphosphate. The enzyme catalyses deoxycholate + ATP + CoA = deoxycholoyl-CoA + AMP + diphosphate. It catalyses the reaction chenodeoxycholate + ATP + CoA = chenodeoxycholoyl-CoA + AMP + diphosphate. It functions in the pathway lipid metabolism; bile acid biosynthesis. Inhibited by diphosphate. In terms of biological role, functions in the bile acid 7alpha-dehydroxylation pathway, which forms secondary bile acids via the 7alpha-dehydroxylation of primary bile acids, and is carried out by intestinal anaerobic bacteria. Catalyzes the initial step in this pathway, i.e. the ATP-dependent thioesterification of primary bile acids with coenzyme A. Is active with C-24 bile acids with free carboxyl groups such as cholate, deoxycholate and chenodeoxycholate. Produces AMP and pyrophosphate in addition to the bile acid-CoA thioester. This Clostridium scindens (strain JCM 10418 / VPI 12708) protein is Bile acid--coenzyme A ligase.